Here is a 675-residue protein sequence, read N- to C-terminus: DNA ligase (675 aa).

NAD(+) is bound by residues 35 to 39, 84 to 85, and Glu115; these read DSEYD and SL. Lys117 acts as the N6-AMP-lysine intermediate in catalysis. The NAD(+) site is built by Arg138, Glu175, Lys292, and Lys316. Residues Cys410, Cys413, Cys428, and Cys434 each contribute to the Zn(2+) site. Residues 593-675 form the BRCT domain; it reads QIVQPLLGRT…RNFLDDTSFP (83 aa).

The protein belongs to the NAD-dependent DNA ligase family. LigA subfamily. Mg(2+) is required as a cofactor. The cofactor is Mn(2+).

The catalysed reaction is NAD(+) + (deoxyribonucleotide)n-3'-hydroxyl + 5'-phospho-(deoxyribonucleotide)m = (deoxyribonucleotide)n+m + AMP + beta-nicotinamide D-nucleotide.. Functionally, DNA ligase that catalyzes the formation of phosphodiester linkages between 5'-phosphoryl and 3'-hydroxyl groups in double-stranded DNA using NAD as a coenzyme and as the energy source for the reaction. It is essential for DNA replication and repair of damaged DNA. The protein is DNA ligase of Nitrosococcus oceani (strain ATCC 19707 / BCRC 17464 / JCM 30415 / NCIMB 11848 / C-107).